We begin with the raw amino-acid sequence, 257 residues long: Methylthioribulose-1-phosphate dehydratase (257 aa).

The interval Met-1–His-33 is disordered. Positions Ile-15–His-33 are enriched in basic and acidic residues. Cys-107 is a binding site for substrate. Positions 125 and 127 each coordinate Zn(2+). Glu-149 acts as the Proton donor/acceptor in catalysis. Zn(2+) is bound at residue His-205.

It belongs to the aldolase class II family. MtnB subfamily. Requires Zn(2+) as cofactor.

It localises to the cytoplasm. It catalyses the reaction 5-(methylsulfanyl)-D-ribulose 1-phosphate = 5-methylsulfanyl-2,3-dioxopentyl phosphate + H2O. The protein operates within amino-acid biosynthesis; L-methionine biosynthesis via salvage pathway; L-methionine from S-methyl-5-thio-alpha-D-ribose 1-phosphate: step 2/6. In terms of biological role, catalyzes the dehydration of methylthioribulose-1-phosphate (MTRu-1-P) into 2,3-diketo-5-methylthiopentyl-1-phosphate (DK-MTP-1-P). Functions in the methionine salvage pathway. May play a role in apoptosis. The protein is Methylthioribulose-1-phosphate dehydratase of Esox lucius (Northern pike).